We begin with the raw amino-acid sequence, 164 residues long: Ribosome maturation factor RimP (164 aa).

It belongs to the RimP family.

It is found in the cytoplasm. In terms of biological role, required for maturation of 30S ribosomal subunits. The chain is Ribosome maturation factor RimP from Mesoplasma florum (strain ATCC 33453 / NBRC 100688 / NCTC 11704 / L1) (Acholeplasma florum).